The following is a 218-amino-acid chain: Ribose-5-phosphate isomerase A (218 aa).

Substrate contacts are provided by residues 28–31 (TGST), 81–84 (DGAD), and 94–97 (KGGG). The Proton acceptor role is filled by glutamate 103. Lysine 121 contacts substrate.

It belongs to the ribose 5-phosphate isomerase family. Homodimer.

The enzyme catalyses aldehydo-D-ribose 5-phosphate = D-ribulose 5-phosphate. It participates in carbohydrate degradation; pentose phosphate pathway; D-ribose 5-phosphate from D-ribulose 5-phosphate (non-oxidative stage): step 1/1. Catalyzes the reversible conversion of ribose-5-phosphate to ribulose 5-phosphate. This Alcanivorax borkumensis (strain ATCC 700651 / DSM 11573 / NCIMB 13689 / SK2) protein is Ribose-5-phosphate isomerase A.